Consider the following 504-residue polypeptide: Facilitated trehalose transporter Tret1 (504 aa).

The Cytoplasmic segment spans residues 1-39; that stretch reads MELNNKEDSPRHTVPFVRQITEDGKAKLEIYRPTTNPIY. A helical transmembrane segment spans residues 40–60; sequence IYTQILAAIAVSMGSMVVGFA. The Extracellular segment spans residues 61-87; the sequence is SAYTSPALVSMQNTTITSFKVTEQEAS. Asparagine 73 carries an N-linked (GlcNAc...) asparagine glycan. The helical transmembrane segment at 88–108 threads the bilayer; it reads WVGGIMPLAGLAGGIAGGPFI. Residues 109-120 lie on the Cytoplasmic side of the membrane; it reads EYLGRKNTILAT. A helical membrane pass occupies residues 121 to 141; it reads AVPFIVAWLLIAFANSIWMVL. The Extracellular segment spans residues 142–145; that stretch reads AGRA. A helical transmembrane segment spans residues 146-166; it reads LSGFCVGIASLSLPVYLGETV. Over 167 to 171 the chain is Cytoplasmic; the sequence is QPEVR. Residues 172–192 form a helical membrane-spanning segment; that stretch reads GTLGLLPTAFGNIGILICFVA. At 193–199 the chain is on the extracellular side; sequence GKYVNWS. The N-linked (GlcNAc...) asparagine glycan is linked to asparagine 197. Residues 200–220 traverse the membrane as a helical segment; that stretch reads GLAFIGSILPIPFMVLTLLIP. At 221-283 the chain is on the cytoplasmic side; the sequence is ETPRWFVTRG…DLMKRSNLKP (63 aa). The chain crosses the membrane as a helical span at residues 284–304; it reads LLIALGLMFFQQLSGINAVIF. Topologically, residues 305–320 are extracellular; sequence YTVSIFKDAGSTIDEN. The chain crosses the membrane as a helical span at residues 321–341; the sequence is LCTIIVGVVNFGATFFATVLI. At 342-347 the chain is on the cytoplasmic side; that stretch reads DRLGRK. The helical transmembrane segment at 348–368 threads the bilayer; it reads ILLYISEVAMVITLLTLGTFF. The Extracellular portion of the chain corresponds to 369 to 387; the sequence is YYKNSGNDVSNIGWLPLAS. Residues 388 to 408 form a helical membrane-spanning segment; that stretch reads FVIYVIGFSSGVGPIPWLMLG. The Cytoplasmic portion of the chain corresponds to 409 to 424; it reads EILPGKIRGSAASVAT. A helical membrane pass occupies residues 425–445; that stretch reads GFNWTCTFIVTKTFADIVAAI. At 446 to 448 the chain is on the extracellular side; that stretch reads GNH. Residues 449–469 form a helical membrane-spanning segment; sequence GAFWFFGVICLIGLFFVIFFV. Residues 470 to 504 lie on the Cytoplasmic side of the membrane; sequence PETQGKSLEEIERKMMGRVRRMSSVANMKPLSFNM.

The protein belongs to the major facilitator superfamily. Sugar transporter (TC 2.A.1.1) family. Trehalose transporter subfamily. As to expression, highest expression in the fat body. Not expressed in other tissues including the midgut, muscle, and integuments after 24 hours of dehydration.

The protein localises to the cell membrane. Its function is as follows. High-capacity facilitative transporter for trehalose, required to induce anhydrobiosis. Anhydrobiotic larvae can survive almost complete dehydration. Does not transport maltose, sucrose or lactose. Mediates the bidirectional transfer of trehalose. Responsible for the transport of trehalose synthesized in the fat body and the incorporation of trehalose into other tissues that require a carbon source, thereby regulating trehalose levels in the hemolymph. This Polypedilum vanderplanki (Sleeping chironomid midge) protein is Facilitated trehalose transporter Tret1.